Here is an 87-residue protein sequence, read N- to C-terminus: UPF0297 protein Sca_1229 (87 aa).

This sequence belongs to the UPF0297 family.

This Staphylococcus carnosus (strain TM300) protein is UPF0297 protein Sca_1229.